A 298-amino-acid polypeptide reads, in one-letter code: Protein DR_1172 (298 aa).

3 LEA-like repeats span residues 48–117 (DAAQ…NVGQ), 128–197 (DQAK…DVAQ), and 201–270 (QGAQ…AGKQ). Residues 174–193 (VQDVKADASKAADQAKDKAQ) are compositionally biased toward basic and acidic residues. A disordered region spans residues 174–298 (VQDVKADASK…MTGNTNTRKN (125 aa)). The segment covering 194–208 (DVAQNVKQGAQQAAS) has biased composition (low complexity). The span at 209 to 233 (DAKDKVQDVKADASRAADQAKDKAQ) shows a compositional bias: basic and acidic residues. Residues 275 to 298 (GSTTNNAGTAGNTGMTGNTNTRKN) show a composition bias toward low complexity.

The protein belongs to the LEA type 1 family.

This chain is Protein DR_1172, found in Deinococcus radiodurans (strain ATCC 13939 / DSM 20539 / JCM 16871 / CCUG 27074 / LMG 4051 / NBRC 15346 / NCIMB 9279 / VKM B-1422 / R1).